A 272-amino-acid polypeptide reads, in one-letter code: Putative phosphoenolpyruvate synthase regulatory protein (272 aa).

ADP is bound at residue 152-159; the sequence is GVSRCGKT.

It belongs to the pyruvate, phosphate/water dikinase regulatory protein family. PSRP subfamily.

The catalysed reaction is [pyruvate, water dikinase] + ADP = [pyruvate, water dikinase]-phosphate + AMP + H(+). It catalyses the reaction [pyruvate, water dikinase]-phosphate + phosphate + H(+) = [pyruvate, water dikinase] + diphosphate. Its function is as follows. Bifunctional serine/threonine kinase and phosphorylase involved in the regulation of the phosphoenolpyruvate synthase (PEPS) by catalyzing its phosphorylation/dephosphorylation. The protein is Putative phosphoenolpyruvate synthase regulatory protein of Pseudomonas fluorescens (strain SBW25).